We begin with the raw amino-acid sequence, 306 residues long: Bifunctional protein FolD (306 aa).

NADP(+)-binding positions include 169-171 (GRS), S194, and I235.

This sequence belongs to the tetrahydrofolate dehydrogenase/cyclohydrolase family. In terms of assembly, homodimer.

The enzyme catalyses (6R)-5,10-methylene-5,6,7,8-tetrahydrofolate + NADP(+) = (6R)-5,10-methenyltetrahydrofolate + NADPH. It carries out the reaction (6R)-5,10-methenyltetrahydrofolate + H2O = (6R)-10-formyltetrahydrofolate + H(+). It participates in one-carbon metabolism; tetrahydrofolate interconversion. Functionally, catalyzes the oxidation of 5,10-methylenetetrahydrofolate to 5,10-methenyltetrahydrofolate and then the hydrolysis of 5,10-methenyltetrahydrofolate to 10-formyltetrahydrofolate. This Thermosynechococcus vestitus (strain NIES-2133 / IAM M-273 / BP-1) protein is Bifunctional protein FolD.